Consider the following 153-residue polypeptide: Deoxyuridine 5'-triphosphate nucleotidohydrolase (153 aa).

Substrate is bound by residues 71-73, asparagine 84, 88-90, and methionine 98; these read RSG and LID.

This sequence belongs to the dUTPase family. The cofactor is Mg(2+).

The enzyme catalyses dUTP + H2O = dUMP + diphosphate + H(+). Its pathway is pyrimidine metabolism; dUMP biosynthesis; dUMP from dCTP (dUTP route): step 2/2. In terms of biological role, this enzyme is involved in nucleotide metabolism: it produces dUMP, the immediate precursor of thymidine nucleotides and it decreases the intracellular concentration of dUTP so that uracil cannot be incorporated into DNA. In Hydrogenovibrio crunogenus (strain DSM 25203 / XCL-2) (Thiomicrospira crunogena), this protein is Deoxyuridine 5'-triphosphate nucleotidohydrolase.